The following is a 230-amino-acid chain: Flagellar L-ring protein (230 aa).

A signal peptide spans 1-21 (MMLKTVLRLPVCAALLALAAG). Cysteine 22 carries the N-palmitoyl cysteine lipid modification. The S-diacylglycerol cysteine moiety is linked to residue cysteine 22. The disordered stretch occupies residues 34 to 53 (PLTAPPPPPPQPSARPNGSI). Over residues 36–46 (TAPPPPPPQPS) the composition is skewed to pro residues.

This sequence belongs to the FlgH family. In terms of assembly, the basal body constitutes a major portion of the flagellar organelle and consists of four rings (L,P,S, and M) mounted on a central rod.

Its subcellular location is the cell outer membrane. It is found in the bacterial flagellum basal body. In terms of biological role, assembles around the rod to form the L-ring and probably protects the motor/basal body from shearing forces during rotation. This Bordetella parapertussis (strain 12822 / ATCC BAA-587 / NCTC 13253) protein is Flagellar L-ring protein.